A 360-amino-acid chain; its full sequence is MSELQEVQITEDNPLLQDPLKAAELAAKLLQVQEQKHSIETPYGVVTVTIQGTPKPKRPAIVTFHDVGMDHKMCFDTLFKYEDMCEIVKNFVVCHIDAPGQEEGSAVYPPGYQYPSLDQLAETIPCVLQYLNFPSIIGIGVGAGAYIFAKYTLSHANTVEGLVLINIDPNAKGWMDWAAQKLTGLTQSISDMMLGHLFSAEELSGNSDVVRQYKASILNSPLISNYQLYWNSYNSRRDLNLERGGGVTLKCPVMLVVGDQAPHEDAVVECNSKLDPTQTSFLKMADSGGQPQITQPGKLTEAFKYFVQGMGYMASSCMTRLSRSRTASLSSEGNRSRSRTLSQSSESGGGPPAPLAEVTC.

Residues 325–360 (RTASLSSEGNRSRSRTLSQSSESGGGPPAPLAEVTC) form a disordered region.

Belongs to the NDRG family.

The protein resides in the cytoplasm. Functionally, contributes to the regulation of the Wnt signaling pathway. Down-regulates CTNNB1-mediated transcriptional activation of target genes. May be involved in neuron differentiation. In Xenopus tropicalis (Western clawed frog), this protein is Protein NDRG2.